The chain runs to 360 residues: GTP 3',8-cyclase (360 aa).

Residues 1–31 (MTVTALGVPTVRGRSEGSAVASDAPGDGPLL) are disordered. In terms of domain architecture, Radical SAM core spans 33-251 (RFGRSATDLR…LQPHFRLRPD (219 aa)). Arg-42 contacts GTP. 2 residues coordinate [4Fe-4S] cluster: Cys-49 and Cys-53. Tyr-55 contacts S-adenosyl-L-methionine. Cys-56 provides a ligand contact to [4Fe-4S] cluster. Arg-93 contacts GTP. Gly-97 is a binding site for S-adenosyl-L-methionine. Residue Thr-124 participates in GTP binding. Ser-148 contributes to the S-adenosyl-L-methionine binding site. Residue Lys-185 participates in GTP binding. Met-219 contributes to the S-adenosyl-L-methionine binding site. [4Fe-4S] cluster-binding residues include Cys-287 and Cys-290. 292–294 (RTR) contacts GTP. Cys-304 serves as a coordination point for [4Fe-4S] cluster.

Belongs to the radical SAM superfamily. MoaA family. In terms of assembly, monomer and homodimer. [4Fe-4S] cluster is required as a cofactor.

The catalysed reaction is GTP + AH2 + S-adenosyl-L-methionine = (8S)-3',8-cyclo-7,8-dihydroguanosine 5'-triphosphate + 5'-deoxyadenosine + L-methionine + A + H(+). Its pathway is cofactor biosynthesis; molybdopterin biosynthesis. In terms of biological role, catalyzes the cyclization of GTP to (8S)-3',8-cyclo-7,8-dihydroguanosine 5'-triphosphate. The protein is GTP 3',8-cyclase of Mycobacterium ulcerans (strain Agy99).